The chain runs to 20 residues: VLLDGNGEVVQNGGTYYLLP.

This sequence belongs to the protease inhibitor I3 (leguminous Kunitz-type inhibitor) family.

Its function is as follows. Inhibition of trypsin. The polypeptide is Trypsin inhibitor DE-3 (Erythrina corallodendron (Coral tree)).